A 345-amino-acid polypeptide reads, in one-letter code: N-acetyl-gamma-glutamyl-phosphate reductase (345 aa).

Cys-151 is a catalytic residue.

The protein belongs to the NAGSA dehydrogenase family. Type 1 subfamily.

It is found in the cytoplasm. The catalysed reaction is N-acetyl-L-glutamate 5-semialdehyde + phosphate + NADP(+) = N-acetyl-L-glutamyl 5-phosphate + NADPH + H(+). It functions in the pathway amino-acid biosynthesis; L-arginine biosynthesis; N(2)-acetyl-L-ornithine from L-glutamate: step 3/4. Functionally, catalyzes the NADPH-dependent reduction of N-acetyl-5-glutamyl phosphate to yield N-acetyl-L-glutamate 5-semialdehyde. This is N-acetyl-gamma-glutamyl-phosphate reductase from Clostridium novyi (strain NT).